We begin with the raw amino-acid sequence, 37 residues long: Potassium channel toxin alpha-KTx 1.11 (37 aa).

Disulfide bonds link C7/C28, C13/C33, and C17/C35.

Belongs to the short scorpion toxin superfamily. Potassium channel inhibitor family. Alpha-KTx 01 subfamily. Expressed by the venom gland.

The protein resides in the secreted. In terms of biological role, reversibly blocks the high conductance calcium-activated potassium channels composed of only alpha subunits (KCa1.1/KCNMA1). Unreversibly blocks the high conductance calcium-activated potassium channels composed of alpha and beta1 subunits (KCNMA1 and KCNMB1). Unreversibly and weakly blocks the high conductance calcium-activated potassium channels composed of alpha and beta4 (KCNMA1 and KCNMB4). The protein is Potassium channel toxin alpha-KTx 1.11 of Centruroides noxius (Mexican scorpion).